The sequence spans 262 residues: MAHLLEKTRKITSILKRSEEQLQDELPYNAITRQLADIIHCNACIINSKGRLLGYFMRYKTNTDRVEQFFQTKIFPDDYVQGANMIYETEANLPVEHDMSIFPVESRDDFPDGLTTIAPIHVSGIRLGSLIIWRNDKKFEDEDLVLVEIASTVVGIQLLNFQREEDEKNIRRRTAVTMAVNTLSYSELRAVSAILGELNGNEGQLTASVIADRIGITRSVIVNALRKLESAGIIESRSLGMKGTYLKVLISDIFEEVKKRDY.

The GAF domain stretch occupies residues 1 to 159 (MAHLLEKTRK…ASTVVGIQLL (159 aa)). The H-T-H motif DNA-binding region spans 207–226 (ASVIADRIGITRSVIVNALR).

This sequence belongs to the CodY family.

The protein localises to the cytoplasm. Functionally, DNA-binding global transcriptional regulator which is involved in the adaptive response to starvation and acts by directly or indirectly controlling the expression of numerous genes in response to nutrient availability. During rapid exponential growth, CodY is highly active and represses genes whose products allow adaptation to nutrient depletion. This chain is Global transcriptional regulator CodY, found in Streptococcus pneumoniae (strain ATCC BAA-255 / R6).